A 355-amino-acid polypeptide reads, in one-letter code: D-alanine--D-alanine ligase (355 aa).

In terms of domain architecture, ATP-grasp spans 143–350 (KQIFSNLSIP…IDQLVAKLID (208 aa)). 178-233 (IEKLNLPVFVKPANSGSSLGISKAKNKSEIIKALQKAWEIDSRIVIEEGLNVRELE) is a binding site for ATP. Mg(2+)-binding residues include D303, E317, and N319.

The protein belongs to the D-alanine--D-alanine ligase family. Mg(2+) serves as cofactor. Requires Mn(2+) as cofactor.

The protein resides in the cytoplasm. It carries out the reaction 2 D-alanine + ATP = D-alanyl-D-alanine + ADP + phosphate + H(+). It participates in cell wall biogenesis; peptidoglycan biosynthesis. Its function is as follows. Cell wall formation. This is D-alanine--D-alanine ligase from Prochlorococcus marinus (strain MIT 9515).